The sequence spans 346 residues: fMet-Leu-Phe receptor (346 aa).

Residues Asn-1 and Asn-7 are each glycosylated (N-linked (GlcNAc...) asparagine). Topologically, residues Asn-1–Ile-24 are extracellular. A helical membrane pass occupies residues Ile-25 to Val-47. Topologically, residues Ala-48–Thr-58 are cytoplasmic. A helical membrane pass occupies residues Ile-59–Val-80. The Extracellular portion of the chain corresponds to Arg-81–Phe-97. Cysteines 95 and 173 form a disulfide. Residues Ile-98–Leu-118 traverse the membrane as a helical segment. Residues Asp-119–Ser-137 are Cytoplasmic-facing. A helical membrane pass occupies residues Leu-138–Ile-159. Residues Arg-160 to Arg-202 lie on the Extracellular side of the membrane. Residues Phe-203–Thr-223 form a helical membrane-spanning segment. Residues Lys-224–Val-239 lie on the Cytoplasmic side of the membrane. Residues Leu-240 to Val-263 traverse the membrane as a helical segment. The Extracellular portion of the chain corresponds to Arg-264–Val-282. Residues Thr-283 to Gly-302 traverse the membrane as a helical segment. The Cytoplasmic segment spans residues Gln-303 to Ala-346. The segment covering Ala-324–Pro-338 has biased composition (polar residues). The interval Ala-324 to Ala-346 is disordered.

The protein belongs to the G-protein coupled receptor 1 family. Post-translationally, phosphorylated; which is necessary for desensitization.

The protein resides in the cell membrane. Its function is as follows. High affinity receptor for N-formyl-methionyl peptides (fMLP), which are powerful neutrophil chemotactic factors. Binding of fMLP to the receptor stimulates intracellular calcium mobilization and superoxide anion release. This response is mediated via a G-protein that activates a phosphatidylinositol-calcium second messenger system. Receptor for TAFA4, mediates its effects on chemoattracting macrophages, promoting phagocytosis and increasing ROS release. Receptor for cathepsin CTSG, leading to increased phagocyte chemotaxis. This is fMet-Leu-Phe receptor (FPR1) from Pongo pygmaeus (Bornean orangutan).